The sequence spans 756 residues: Zinc finger and BTB domain-containing protein 49 (756 aa).

The BTB domain occupies 25–91 (CDCMLVVRGV…MYTSRLDLNQ (67 aa)). 3 disordered regions span residues 176-197 (APSA…GGSC), 226-290 (PSQV…LSEP), and 311-379 (SQQS…PSQA). The segment covering 226–242 (PSQVPATQQPLTRSAST) has biased composition (polar residues). Composition is skewed to basic and acidic residues over residues 319–341 (SHPE…DAVE) and 348–365 (AEEK…REEE). 7 C2H2-type zinc fingers span residues 386 to 408 (YACE…KRSH), 414 to 436 (FECN…LRRH), 442 to 464 (YICE…IIIH), 470 to 492 (HLCD…KKTH), 498 to 520 (FTCD…RVRH), 526 to 548 (YSCP…VRTH), and 554 to 576 (YSCE…KRMH).

The protein belongs to the krueppel C2H2-type zinc-finger protein family. In terms of assembly, interacts with EP300, KAT5/Tip60 and ZBTB17. The interaction with EP300 is direct and leads to synergistic induction of CDKN1A. On the CDKN1A promoter, forms a complex with ZBTB17; this interaction leads to additive CDKN1A transactivation. The interaction with ZBTB17 may block ZBTB17 repressor activity. Widely expressed, with highest levels in white adipose tissue and kidney, intermediate levels in brain, liver and heart, and lowest levels in spleen, brown adipose tissue and muscle.

Its subcellular location is the cytoplasm. The protein localises to the nucleus. Transcription factor. Inhibits cell proliferation by activating either CDKN1A/p21 transcription or RB1 transcription. The protein is Zinc finger and BTB domain-containing protein 49 (Zbtb49) of Mus musculus (Mouse).